A 557-amino-acid polypeptide reads, in one-letter code: Formate--tetrahydrofolate ligase (557 aa).

An ATP-binding site is contributed by 66 to 73 (TPAGEGKS).

Belongs to the formate--tetrahydrofolate ligase family.

The catalysed reaction is (6S)-5,6,7,8-tetrahydrofolate + formate + ATP = (6R)-10-formyltetrahydrofolate + ADP + phosphate. It participates in one-carbon metabolism; tetrahydrofolate interconversion. The protein is Formate--tetrahydrofolate ligase of Clostridium botulinum (strain 657 / Type Ba4).